Reading from the N-terminus, the 332-residue chain is Holliday junction branch migration complex subunit RuvB (332 aa).

The large ATPase domain (RuvB-L) stretch occupies residues 1–181 (MSRILDNEIM…FGITGHMEYY (181 aa)). ATP-binding positions include leucine 20, arginine 21, glycine 62, lysine 65, threonine 66, threonine 67, 128 to 130 (EDF), arginine 171, tyrosine 181, and arginine 218. Threonine 66 provides a ligand contact to Mg(2+). The interval 182–252 (AHADLTEIVE…ITDKALTMLD (71 aa)) is small ATPAse domain (RuvB-S). A head domain (RuvB-H) region spans residues 255–332 (HEGLDYVDQK…EHLGYEYNEK (78 aa)). DNA is bound by residues arginine 291, arginine 310, arginine 312, and arginine 315.

Belongs to the RuvB family. In terms of assembly, homohexamer. Forms an RuvA(8)-RuvB(12)-Holliday junction (HJ) complex. HJ DNA is sandwiched between 2 RuvA tetramers; dsDNA enters through RuvA and exits via RuvB. An RuvB hexamer assembles on each DNA strand where it exits the tetramer. Each RuvB hexamer is contacted by two RuvA subunits (via domain III) on 2 adjacent RuvB subunits; this complex drives branch migration. In the full resolvosome a probable DNA-RuvA(4)-RuvB(12)-RuvC(2) complex forms which resolves the HJ.

The protein resides in the cytoplasm. It catalyses the reaction ATP + H2O = ADP + phosphate + H(+). The RuvA-RuvB-RuvC complex processes Holliday junction (HJ) DNA during genetic recombination and DNA repair, while the RuvA-RuvB complex plays an important role in the rescue of blocked DNA replication forks via replication fork reversal (RFR). RuvA specifically binds to HJ cruciform DNA, conferring on it an open structure. The RuvB hexamer acts as an ATP-dependent pump, pulling dsDNA into and through the RuvAB complex. RuvB forms 2 homohexamers on either side of HJ DNA bound by 1 or 2 RuvA tetramers; 4 subunits per hexamer contact DNA at a time. Coordinated motions by a converter formed by DNA-disengaged RuvB subunits stimulates ATP hydrolysis and nucleotide exchange. Immobilization of the converter enables RuvB to convert the ATP-contained energy into a lever motion, pulling 2 nucleotides of DNA out of the RuvA tetramer per ATP hydrolyzed, thus driving DNA branch migration. The RuvB motors rotate together with the DNA substrate, which together with the progressing nucleotide cycle form the mechanistic basis for DNA recombination by continuous HJ branch migration. Branch migration allows RuvC to scan DNA until it finds its consensus sequence, where it cleaves and resolves cruciform DNA. This is Holliday junction branch migration complex subunit RuvB from Streptococcus pneumoniae (strain CGSP14).